A 341-amino-acid chain; its full sequence is Glucokinase (341 aa).

18–23 (GDIGGT) is an ATP binding site.

This sequence belongs to the bacterial glucokinase family.

The protein localises to the cytoplasm. It catalyses the reaction D-glucose + ATP = D-glucose 6-phosphate + ADP + H(+). In Mesorhizobium japonicum (strain LMG 29417 / CECT 9101 / MAFF 303099) (Mesorhizobium loti (strain MAFF 303099)), this protein is Glucokinase.